We begin with the raw amino-acid sequence, 332 residues long: Holliday junction branch migration complex subunit RuvB (332 aa).

Positions 1 to 181 are large ATPase domain (RuvB-L); sequence MSRILDNEIM…FGITGHMEYY (181 aa). ATP-binding positions include Leu20, Arg21, Gly62, Lys65, Thr66, Thr67, 128–130, Arg171, Tyr181, and Arg218; that span reads EDF. Mg(2+) is bound at residue Thr66. The small ATPAse domain (RuvB-S) stretch occupies residues 182–252; the sequence is AHADLTEIVE…ITDKALTMLD (71 aa). Positions 255–332 are head domain (RuvB-H); it reads HEGLDYVDQK…EHLGYEYNEK (78 aa). Positions 291, 310, 312, and 315 each coordinate DNA.

Belongs to the RuvB family. In terms of assembly, homohexamer. Forms an RuvA(8)-RuvB(12)-Holliday junction (HJ) complex. HJ DNA is sandwiched between 2 RuvA tetramers; dsDNA enters through RuvA and exits via RuvB. An RuvB hexamer assembles on each DNA strand where it exits the tetramer. Each RuvB hexamer is contacted by two RuvA subunits (via domain III) on 2 adjacent RuvB subunits; this complex drives branch migration. In the full resolvosome a probable DNA-RuvA(4)-RuvB(12)-RuvC(2) complex forms which resolves the HJ.

It is found in the cytoplasm. It carries out the reaction ATP + H2O = ADP + phosphate + H(+). In terms of biological role, the RuvA-RuvB-RuvC complex processes Holliday junction (HJ) DNA during genetic recombination and DNA repair, while the RuvA-RuvB complex plays an important role in the rescue of blocked DNA replication forks via replication fork reversal (RFR). RuvA specifically binds to HJ cruciform DNA, conferring on it an open structure. The RuvB hexamer acts as an ATP-dependent pump, pulling dsDNA into and through the RuvAB complex. RuvB forms 2 homohexamers on either side of HJ DNA bound by 1 or 2 RuvA tetramers; 4 subunits per hexamer contact DNA at a time. Coordinated motions by a converter formed by DNA-disengaged RuvB subunits stimulates ATP hydrolysis and nucleotide exchange. Immobilization of the converter enables RuvB to convert the ATP-contained energy into a lever motion, pulling 2 nucleotides of DNA out of the RuvA tetramer per ATP hydrolyzed, thus driving DNA branch migration. The RuvB motors rotate together with the DNA substrate, which together with the progressing nucleotide cycle form the mechanistic basis for DNA recombination by continuous HJ branch migration. Branch migration allows RuvC to scan DNA until it finds its consensus sequence, where it cleaves and resolves cruciform DNA. This is Holliday junction branch migration complex subunit RuvB from Streptococcus pneumoniae (strain CGSP14).